Consider the following 692-residue polypeptide: DNA ligase (692 aa).

NAD(+) contacts are provided by residues 35–39, 88–89, and E117; these read DLVYD and SL. K119 functions as the N6-AMP-lysine intermediate in the catalytic mechanism. The NAD(+) site is built by R140, E176, K301, and K325. C416, C419, C434, and C439 together coordinate Zn(2+). The 82-residue stretch at 611 to 692 folds into the BRCT domain; it reads LTNQSNSWAS…FDLIKNSKKT (82 aa).

This sequence belongs to the NAD-dependent DNA ligase family. LigA subfamily. Mg(2+) serves as cofactor. It depends on Mn(2+) as a cofactor.

The enzyme catalyses NAD(+) + (deoxyribonucleotide)n-3'-hydroxyl + 5'-phospho-(deoxyribonucleotide)m = (deoxyribonucleotide)n+m + AMP + beta-nicotinamide D-nucleotide.. Its function is as follows. DNA ligase that catalyzes the formation of phosphodiester linkages between 5'-phosphoryl and 3'-hydroxyl groups in double-stranded DNA using NAD as a coenzyme and as the energy source for the reaction. It is essential for DNA replication and repair of damaged DNA. This is DNA ligase from Mesomycoplasma hyopneumoniae (strain 232) (Mycoplasma hyopneumoniae).